We begin with the raw amino-acid sequence, 178 residues long: Probable DNA-directed RNA polymerase subunit delta (178 aa).

The HTH HARE-type domain occupies 14 to 81; it reads KSFIDMAYTL…GENLWGLRDW (68 aa). Residues 114–178 are disordered; it reads LGDDDADEDD…AFEDAEDFND (65 aa). Residues 116-178 show a composition bias toward acidic residues; that stretch reads DDDADEDDDI…AFEDAEDFND (63 aa).

The protein belongs to the RpoE family. In terms of assembly, RNAP is composed of a core of 2 alpha, a beta and a beta' subunits. The core is associated with a delta subunit and one of several sigma factors.

In terms of biological role, participates in both the initiation and recycling phases of transcription. In the presence of the delta subunit, RNAP displays an increased specificity of transcription, a decreased affinity for nucleic acids, and an increased efficiency of RNA synthesis because of enhanced recycling. The sequence is that of Probable DNA-directed RNA polymerase subunit delta from Staphylococcus epidermidis (strain ATCC 35984 / DSM 28319 / BCRC 17069 / CCUG 31568 / BM 3577 / RP62A).